Here is a 253-residue protein sequence, read N- to C-terminus: Imidazole glycerol phosphate synthase subunit HisF (253 aa).

Active-site residues include aspartate 11 and aspartate 130.

It belongs to the HisA/HisF family. As to quaternary structure, heterodimer of HisH and HisF.

It localises to the cytoplasm. The enzyme catalyses 5-[(5-phospho-1-deoxy-D-ribulos-1-ylimino)methylamino]-1-(5-phospho-beta-D-ribosyl)imidazole-4-carboxamide + L-glutamine = D-erythro-1-(imidazol-4-yl)glycerol 3-phosphate + 5-amino-1-(5-phospho-beta-D-ribosyl)imidazole-4-carboxamide + L-glutamate + H(+). Its pathway is amino-acid biosynthesis; L-histidine biosynthesis; L-histidine from 5-phospho-alpha-D-ribose 1-diphosphate: step 5/9. Functionally, IGPS catalyzes the conversion of PRFAR and glutamine to IGP, AICAR and glutamate. The HisF subunit catalyzes the cyclization activity that produces IGP and AICAR from PRFAR using the ammonia provided by the HisH subunit. This is Imidazole glycerol phosphate synthase subunit HisF from Clostridium botulinum (strain Okra / Type B1).